Here is a 97-residue protein sequence, read N- to C-terminus: MKKAIHFQSQPVVFNCASCNSNFTIDSTAKQKDLAIDICGKCHPFYIGQLTKQTVHGRAEKLSQKFNAGKAFLENKTKKSNQAKVEKQTRHRSINEL.

Residues 75 to 97 (NKTKKSNQAKVEKQTRHRSINEL) form a disordered region. Basic and acidic residues predominate over residues 84 to 97 (KVEKQTRHRSINEL).

It belongs to the bacterial ribosomal protein bL31 family. Type A subfamily. As to quaternary structure, part of the 50S ribosomal subunit.

Functionally, binds the 23S rRNA. In Mycoplasma genitalium (strain ATCC 33530 / DSM 19775 / NCTC 10195 / G37) (Mycoplasmoides genitalium), this protein is Large ribosomal subunit protein bL31.